A 175-amino-acid polypeptide reads, in one-letter code: uncharacterized protein (175 aa).

The signal sequence occupies residues 1-22 (MNRIVGILISILMLACIGVTMA).

This is an uncharacterized protein from Archaeoglobus fulgidus (strain ATCC 49558 / DSM 4304 / JCM 9628 / NBRC 100126 / VC-16).